We begin with the raw amino-acid sequence, 182 residues long: Heat shock protein beta-2 (182 aa).

The 109-residue stretch at 55–163 (RAGEGGRAGA…DTEVNEVYIS (109 aa)) folds into the sHSP domain.

Belongs to the small heat shock protein (HSP20) family. Interacts with DMPK; may enhance its kinase activity.

The protein resides in the cytoplasm. The protein localises to the nucleus. In terms of biological role, may regulate the kinase DMPK. The sequence is that of Heat shock protein beta-2 (Hspb2) from Rattus norvegicus (Rat).